We begin with the raw amino-acid sequence, 1770 residues long: Transposon Ty2-F Gag-Pol polyprotein (1770 aa).

3 stretches are compositionally biased toward polar residues: residues 1–11, 19–39, and 49–60; these read MESQQLHQNPH, ASVTSKEVPSNQDPLAVSASN, and KVNSQQETTPGT. Disordered stretches follow at residues 1-86 and 359-453; these read MESQ…GQYQ and QHSE…LPDH. The tract at residues 295 to 397 is RNA-binding; sequence ENNINVSDRL…SSKPRAAKAH (103 aa). Low complexity predominate over residues 369–381; the sequence is TSPNTTNTKVTTR. 2 stretches are compositionally biased toward polar residues: residues 399–408 and 415–435; these read IATSSKFSRV and ESTVSSQYLSDDNELSLGQQQ. The active-site For protease activity; shared with dimeric partner is the D457. The segment at 579–636 is integrase-type zinc finger-like; it reads NVNKSKSVNKYPYPLIHRMLGHANFRSIQKSLKKNAVTYLKESDIEWSNASTYQCPDC. The 176-residue stretch at 656 to 831 folds into the Integrase catalytic domain; it reads ESYEPFQYLH…AGLDITTILP (176 aa). The Mg(2+) site is built by D667 and D732. 4 disordered regions span residues 1004 to 1034, 1059 to 1135, 1146 to 1165, and 1170 to 1205; these read MGGTVESDTTSPRHSSTFTARNQNRPGSTNE, TEEP…KSSK, LPLPDLTHKSPTDTSDVSKD, and HSRQTNSSLGGMDDSNVLTTTKSKKRSLEDNETEIE. Composition is skewed to polar residues over residues 1009-1034 and 1065-1082; these read ESDTTSPRHSSTFTARNQNRPGSTNE and QRNSDTNIKYRTTNSTPS. A compositionally biased stretch (basic and acidic residues) spans 1151-1165; the sequence is LTHKSPTDTSDVSKD. Residues 1193 to 1227 carry the Bipartite nuclear localization signal motif; sequence KKRSLEDNETEIEVSRDTWNNKNMRSLEPPRSKKR. Positions 1353–1491 constitute a Reverse transcriptase Ty1/copia-type domain; it reads NDYYITQLDI…DILGLEIKYQ (139 aa). Mg(2+) is bound by residues D1361, D1442, D1443, D1625, E1667, and D1700. In terms of domain architecture, RNase H Ty1/copia-type spans 1625–1767; that stretch reads DASYGNQPYY…IKTFKLLTNK (143 aa).

In terms of assembly, the capsid protein forms a homotrimer, from which the VLPs are assembled. The protease is a homodimer, whose active site consists of two apposed aspartic acid residues. Initially, virus-like particles (VLPs) are composed of the structural unprocessed proteins Gag and Gag-Pol, and also contain the host initiator methionine tRNA (tRNA(i)-Met) which serves as a primer for minus-strand DNA synthesis, and a dimer of genomic Ty RNA. Processing of the polyproteins occurs within the particle and proceeds by an ordered pathway, called maturation. First, the protease (PR) is released by autocatalytic cleavage of the Gag-Pol polyprotein, and this cleavage is a prerequisite for subsequent processing at the remaining sites to release the mature structural and catalytic proteins. Maturation takes place prior to the RT reaction and is required to produce transposition-competent VLPs.

It localises to the cytoplasm. The protein localises to the nucleus. The enzyme catalyses DNA(n) + a 2'-deoxyribonucleoside 5'-triphosphate = DNA(n+1) + diphosphate. The catalysed reaction is Endonucleolytic cleavage to 5'-phosphomonoester.. Functionally, capsid protein (CA) is the structural component of the virus-like particle (VLP), forming the shell that encapsulates the retrotransposons dimeric RNA genome. The particles are assembled from trimer-clustered units and there are holes in the capsid shells that allow for the diffusion of macromolecules. CA also has nucleocapsid-like chaperone activity, promoting primer tRNA(i)-Met annealing to the multipartite primer-binding site (PBS), dimerization of Ty2 RNA and initiation of reverse transcription. In terms of biological role, the aspartyl protease (PR) mediates the proteolytic cleavages of the Gag and Gag-Pol polyproteins after assembly of the VLP. Reverse transcriptase/ribonuclease H (RT) is a multifunctional enzyme that catalyzes the conversion of the retro-elements RNA genome into dsDNA within the VLP. The enzyme displays a DNA polymerase activity that can copy either DNA or RNA templates, and a ribonuclease H (RNase H) activity that cleaves the RNA strand of RNA-DNA heteroduplexes during plus-strand synthesis and hydrolyzes RNA primers. The conversion leads to a linear dsDNA copy of the retrotransposon that includes long terminal repeats (LTRs) at both ends. Its function is as follows. Integrase (IN) targets the VLP to the nucleus, where a subparticle preintegration complex (PIC) containing at least integrase and the newly synthesized dsDNA copy of the retrotransposon must transit the nuclear membrane. Once in the nucleus, integrase performs the integration of the dsDNA into the host genome. The chain is Transposon Ty2-F Gag-Pol polyprotein (TY2B-F) from Saccharomyces cerevisiae (strain ATCC 204508 / S288c) (Baker's yeast).